The chain runs to 485 residues: Auxin transporter protein 1 (485 aa).

Residues 1 to 59 are Cytoplasmic-facing; the sequence is MSEGVEAIVANDNGTDQVNGNRTGKDNEEHDGSTGSNLSNFLWHGGSVWDAWFSCASNQ. Polar residues predominate over residues 12–22; the sequence is DNGTDQVNGNR. The interval 12–33 is disordered; that stretch reads DNGTDQVNGNRTGKDNEEHDGS. Basic and acidic residues predominate over residues 23–32; it reads TGKDNEEHDG. Residues 60–77 traverse the membrane as a helical segment; sequence VAQVLLTLPYSFSQLGML. Residues 78 to 79 lie on the Extracellular side of the membrane; it reads SG. Residues 80–100 form a helical membrane-spanning segment; sequence IVLQIFYGLLGSWTAYLISVL. Topologically, residues 101–135 are cytoplasmic; sequence YVEYRARKEKEGKSFKNHVIQWFEVLDGLLGSYWK. A helical transmembrane segment spans residues 136–156; that stretch reads ALGLAFNCTFLLFGSVIQLIA. Residues 157-172 lie on the Extracellular side of the membrane; it reads CASNIYYINDHLDKRT. A helical transmembrane segment spans residues 173–193; that stretch reads WTYIFGACCATTVFIPSFHNY. Topologically, residues 194-196 are cytoplasmic; it reads RIW. Residues 197-217 traverse the membrane as a helical segment; that stretch reads SFLGLGMTTYTAWYLAIASII. The Extracellular segment spans residues 218 to 232; that stretch reads HGQAEGVKHSGPTKL. A helical membrane pass occupies residues 233-253; it reads VLYFTGATNILYTFGGHAVTV. At 254–266 the chain is on the cytoplasmic side; it reads EIMHAMWKPQKFK. The helical transmembrane segment at 267 to 287 threads the bilayer; sequence YIYLMATLYVFTLTIPSAAAV. At 288 to 314 the chain is on the extracellular side; that stretch reads YWAFGDALLDHSNAFSLMPKNAWRDAA. The helical transmembrane segment at 315–335 threads the bilayer; sequence VILMLIHQFITFGFACTPLYF. At 336–356 the chain is on the cytoplasmic side; it reads VWEKVIGMHDTKSICLRALAR. Residues 357-377 traverse the membrane as a helical segment; it reads LPVVIPIWFLAIIFPFFGPIN. Residue S378 is a topological domain, extracellular. Residues 379–399 traverse the membrane as a helical segment; sequence AVGALLVSFTVYIIPSLAHML. Over 400–425 the chain is Cytoplasmic; the sequence is TYRSASARQNAAEKPPFFMPSWTAMY. A helical transmembrane segment spans residues 426–446; it reads VLNAFVVVWVLIVGFGFGGWA. The Extracellular segment spans residues 447-485; sequence SVTNFVRQVDTFGLFAKCYQCKPAAAAAHAPVSALHHRL.

Belongs to the amino acid/polyamine transporter 2 family. Amino acid/auxin permease (AAAP) (TC 2.A.18.1) subfamily. As to expression, expressed in root and shoot apical tissues. In root apex, confined to stele initials, protophloem poles, statolith-containing S2 columella cells, lateral root cap cells (LRC), and in epidermal cells from the distal elongation zone (DEZ) up to central elongation zone (CEZ).

It localises to the cell membrane. With respect to regulation, auxin uptake mediated by AUX1 is inhibited by chromosaponin-1 (CSI), 1-naphthoxyacetic acid (1-NOA) and 3-chloro-4-hydroxyphenylacetic acid (CHPAA). In terms of biological role, carrier protein involved in proton-driven auxin influx. Mediates the formation of auxin gradient from developing leaves (site of auxin biosynthesis) to tips by contributing to the loading of auxin in vascular tissues and facilitating acropetal (base to tip) auxin transport within inner tissues of the root apex, and basipetal (tip to base) auxin transport within outer tissues of the root apex. Unloads auxin from the mature phloem to deliver the hormone to the root meristem via the protophloem cell files. Coordinated subcellular localization of AUX1 is regulated by a brefeldin A-sensitive (BFA) vesicle trafficking process. Involved in lateral root formation, trichoblast polarization and root hair elongation. Required for gravitropism and thigmotropism, especially in roots, by modulating responses to auxin, ethylene and cytokinins such as benzyladenine (BA). Needed for ammonium-mediated root-growth inhibition. Confers sensitivity to the herbicide 2,4-dichlorophenoxyacetic acid (2,4-D, auxin analog), and to polar auxin transport inhibitors such as N-1-naphthylphthalamic acid (NPA) and 2,3,5-triiodobenzoic acid (TIBA). The polypeptide is Auxin transporter protein 1 (AUX1) (Arabidopsis thaliana (Mouse-ear cress)).